The chain runs to 575 residues: Proline--tRNA ligase, cytoplasmic (575 aa).

The protein belongs to the class-II aminoacyl-tRNA synthetase family.

It localises to the cytoplasm. It catalyses the reaction tRNA(Pro) + L-proline + ATP = L-prolyl-tRNA(Pro) + AMP + diphosphate. The protein is Proline--tRNA ligase, cytoplasmic (PRS) of Candida albicans (Yeast).